A 468-amino-acid chain; its full sequence is UDP-N-acetylmuramate--L-alanine ligase (468 aa).

An ATP-binding site is contributed by 121 to 127 (GSHGKTT).

Belongs to the MurCDEF family.

It localises to the cytoplasm. It carries out the reaction UDP-N-acetyl-alpha-D-muramate + L-alanine + ATP = UDP-N-acetyl-alpha-D-muramoyl-L-alanine + ADP + phosphate + H(+). It participates in cell wall biogenesis; peptidoglycan biosynthesis. In terms of biological role, cell wall formation. This chain is UDP-N-acetylmuramate--L-alanine ligase, found in Borrelia garinii subsp. bavariensis (strain ATCC BAA-2496 / DSM 23469 / PBi) (Borreliella bavariensis).